A 293-amino-acid polypeptide reads, in one-letter code: MALSLSLFLGGRVRAAVARCGFASQGVAGPGSISREPDPDSDWEPEERELQEVESALKRQKKAMRFQKIRRQMEAPGAPPRTLTWEAMEQIRYLHKEFAESWSVPRLAEGFDVSTDVIRRVLKSKFIPTLEQKLKQDQKVLKKAGITRVVWQLPVSEDTLKPLSAGHPMSGPLLMPGDEVSSNSQTHSRALKVKSNAPSAEAQKKREEKNKRIRVLAESLVPTTTALGHQRELQKYTTHDSEADRRANNHILPSVEKLEELEAGEPGDQNFSSKVVQKGREFFDSNGNFLYRI.

The N-terminal stretch at Met1–Ala15 is a signal peptide. Disordered regions lie at residues Gln25–Arg48 and Pro162–Lys211. At Ser41 the chain carries Phosphoserine. Asn270 is a glycosylation site (N-linked (GlcNAc...) asparagine).

It belongs to the neugrin family. As to quaternary structure, forms a regulatory protein-RNA complex, consisting of RCC1L, NGRN, RPUSD3, RPUSD4, TRUB2, FASTKD2 and 16S mt-rRNA. Interacts with 16S mt-rRNA; this interaction is direct.

It is found in the nucleus. The protein resides in the secreted. The protein localises to the mitochondrion membrane. Plays an essential role in mitochondrial ribosome biogenesis. As a component of a functional protein-RNA module, consisting of RCC1L, NGRN, RPUSD3, RPUSD4, TRUB2, FASTKD2 and 16S mitochondrial ribosomal RNA (16S mt-rRNA), controls 16S mt-rRNA abundance and is required for intra-mitochondrial translation of core subunits of the oxidative phosphorylation system. The sequence is that of Neugrin (Ngrn) from Rattus norvegicus (Rat).